Consider the following 714-residue polypeptide: Angiogenic factor with G patch and FHA domains 1 (714 aa).

Over residues 1–18 (MASEAPSPPRSPPPPTSP) the composition is skewed to pro residues. Disordered regions lie at residues 1–22 (MASE…EPEL), 259–307 (QPYP…HTSC), and 322–384 (IGIH…SYDE). At A2 the chain carries N-acetylalanine. Phosphoserine is present on residues S7 and S11. Residues 18–88 (PEPELAQLRR…QRGRNEDNKK (71 aa)) adopt a coiled-coil conformation. The segment covering 279–298 (KDPDSSATNEEKDLNSEDQK) has biased composition (basic and acidic residues). The segment covering 335-355 (VPTSGNTIESPLHENISNSTS) has biased composition (polar residues). A Phosphoserine modification is found at S344. The segment covering 364-383 (TDSEPEEGEITDSQTEDSYD) has biased composition (acidic residues). The FHA domain maps to 434–487 (ATIGREKDMEHTLRIPEVGVSKFHAEIYFDHDLQSYVLVDQGSQNGTIVNGKQI). Positions 586 to 609 (KYKDRAGKRREQVGSEGTFQRDDA) are enriched in basic and acidic residues. 2 disordered regions span residues 586 to 617 (KYKD…HSEI) and 655 to 714 (RTHA…GTLE). The G-patch domain maps to 619 to 665 (DSNKGRKMLEKMGWKKGEGLGKDGGGMKTPIQLQLRRTHAGLGTGKP). K664 is modified (N6-acetyllysine). The span at 680–690 (KNWDKARERFT) shows a compositional bias: basic and acidic residues.

As to quaternary structure, interacts with the secreted angiogenic factor TNFSF12. Widely expressed. Expressed in endothelial cells, vascular smooth muscle cells and osteoblasts. Expressed in umbilical vein endothelial cells and microvascular endothelial cells.

The protein resides in the cytoplasm. Its subcellular location is the secreted. Promotes angiogenesis and the proliferation of endothelial cells. Able to bind to endothelial cells and promote cell proliferation, suggesting that it may act in an autocrine fashion. The protein is Angiogenic factor with G patch and FHA domains 1 (AGGF1) of Homo sapiens (Human).